The chain runs to 324 residues: CYFIP-related Rac1 interactor B (324 aa).

The N-myristoyl glycine moiety is linked to residue Gly2. A Glycyl lysine isopeptide (Lys-Gly) (interchain with G-Cter in ubiquitin) cross-link involves residue Lys74.

This sequence belongs to the CYRI family. Interacts with RAC1 (GTP-bound form preferentially). Ubiquitinated at Lys-74 upon Salmonella bacterial infection. As to expression, expressed in pancreatic ducts (at protein level).

It localises to the membrane. The protein resides in the mitochondrion. Its function is as follows. Negatively regulates RAC1 signaling and RAC1-driven cytoskeletal remodeling. Regulates chemotaxis, cell migration and epithelial polarization by controlling the polarity, plasticity, duration and extent of protrusions. Limits Rac1 mediated activation of the Scar/WAVE complex, focuses protrusion signals and regulates pseudopod complexity by inhibiting Scar/WAVE-induced actin polymerization. Protects against Salmonella bacterial infection. Attenuates processes such as macropinocytosis, phagocytosis and cell migration and restrict sopE-mediated bacterial entry. Also restricts infection mediated by Mycobacterium tuberculosis and Listeria monocytogenes. Involved in the regulation of mitochondrial dynamics and oxidative stress. This Mus musculus (Mouse) protein is CYFIP-related Rac1 interactor B (Cyrib).